We begin with the raw amino-acid sequence, 76 residues long: Acyl carrier protein (76 aa).

Residues 1 to 76 (MATFDEVKEV…AAVDYIGSKQ (76 aa)) enclose the Carrier domain. The residue at position 36 (S36) is an O-(pantetheine 4'-phosphoryl)serine.

The protein belongs to the acyl carrier protein (ACP) family. Post-translationally, 4'-phosphopantetheine is transferred from CoA to a specific serine of apo-ACP by AcpS. This modification is essential for activity because fatty acids are bound in thioester linkage to the sulfhydryl of the prosthetic group.

The protein localises to the cytoplasm. It participates in lipid metabolism; fatty acid biosynthesis. Its function is as follows. Carrier of the growing fatty acid chain in fatty acid biosynthesis. This is Acyl carrier protein from Deinococcus geothermalis (strain DSM 11300 / CIP 105573 / AG-3a).